Consider the following 261-residue polypeptide: Oligodendrocyte transcription factor 1 (261 aa).

Residues 41–105 are disordered; it reads PPISSSSSTS…LRRKINSRER (65 aa). Positions 44–56 are enriched in low complexity; that stretch reads SSSSSTSSSSTAS. One can recognise a bHLH domain in the interval 95-154; the sequence is QLRRKINSRERKRMQDLNLAMDALREVILPYSAAHCQGAPGRKLSKIATLLLARNYILLL.

Expressed specifically in the brain, including the corpus callosum, hippocampal and cerebral white matter. Also detected in cells scattered in gray matter, most probably in oligodendrocytes.

Its subcellular location is the nucleus. Promotes formation and maturation of oligodendrocytes, especially within the brain. Cooperates with OLIG2 to establish the pMN domain of the embryonic neural tube. This Rattus norvegicus (Rat) protein is Oligodendrocyte transcription factor 1 (Olig1).